We begin with the raw amino-acid sequence, 685 residues long: MGALTSRQHAGVEEVDIPSNSVYRYPPKSGSYFASHFIMGGEKFDSTHPEGYLFGENSDLNFLGNRPVAFPYAAPPPQEPVKTLRSLINIRKDTLRLVKCAEEVKSHGEEAGKAKVHYNVEFTFDTDARVAITIYYQATEEFQNGIASYIPKDNSLQSETVHYKRGVFQQFCLPSHTVDPSEWAEEELGFDLDREVYPLVVHAVVDEGDEYFGHCHVLLGTFEKHPDGTFCVKPLKQKQVVDGVSYLLQEIYGIENKYNTQDSKVAEDDVSDNSAECVVCLSDVRDTLILPCRHLCLCNTCADTLRYQANNCPICRLPFRALLQIRAMRKKLGPLSPSSFNPIISSQTSDSEEHSSSENIPPGYEVVSLLEALNGPLTSSPAVPPLHVLGDGHLSGMLPSYGSDGYLPPVRTLSPLDRLSDCNNQGLKLKKSLSKSISQNSSVLHEEEDERSCSESDTQLSQRLSVQHPEEGPDVTPESENLTLSSSGAVDQSSCTGTPLSSTISSPEDPASSSLAQSVMSMASSQISTDTVSSMSGSYIAPGTEEEGEALPSPRAASRAPSEGEETPAESPDSNFAGLPAGEQDAEGNDIIEEEDRSPVREDGQRTCAFLGMECDNNNDFDVASVKALDNKLCSEVCLPGEWQCAEHELGGRRPSARPRSPRGGLGKEASAFRIETVALPGTYV.

A lipid anchor (N-myristoyl glycine) is attached at glycine 2. The segment at 276–315 adopts an RING-type zinc-finger fold; it reads ECVVCLSDVRDTLILPCRHLCLCNTCADTLRYQANNCPIC. The short motif at 329-332 is the D-box 1 element; that stretch reads RKKL. Disordered stretches follow at residues 339-361, 433-584, and 650-672; these read SFNP…ENIP, LSKS…AGEQ, and LGGR…EASA. A compositionally biased stretch (low complexity) spans 434–443; sequence SKSISQNSSV. A compositionally biased stretch (polar residues) spans 478-537; sequence ESENLTLSSSGAVDQSSCTGTPLSSTISSPEDPASSSLAQSVMSMASSQISTDTVSSMSG. Residues 552-561 show a composition bias toward low complexity; the sequence is PSPRAASRAP. A D-box 2 motif is present at residues 657 to 660; the sequence is ARPR.

Interacts with APBB1. Interacts with CHD1; CHD1-binding controls RNF157 stability. Also interacts with ATRN, MEGF8, TECR, MSI2, PLRG1, BYSL, MTERF3, PSMA1, MRPS18B, PRPF4, FASTKD2, SLC25A1, SMU1, CNOT9, MRPS2, MAGT1, FXR2, EMD, PSMD8, HDAC1, RAN, HSD17B12, TXNDC5 and MRPL19.

The protein localises to the cytoplasm. The enzyme catalyses S-ubiquitinyl-[E2 ubiquitin-conjugating enzyme]-L-cysteine + [acceptor protein]-L-lysine = [E2 ubiquitin-conjugating enzyme]-L-cysteine + N(6)-ubiquitinyl-[acceptor protein]-L-lysine.. Functionally, E3 ubiquitin ligase that ubiquitinates APBB1 for its degradation by the proteasome and thus prevents apoptosis and promotes survival of neurons. Has a dual role in neurons as it is also required for dendrite growth and maintenance for which its ligase activity is not critical. May act as a scaffold molecule to regulate this process. Acts as a downstream effector of the interconnected PI3K and MAPK signaling pathways and thus participates in the regulation of the cell cycle. The protein is E3 ubiquitin ligase Rnf157 (Rnf157) of Mus musculus (Mouse).